A 488-amino-acid polypeptide reads, in one-letter code: Ribulose bisphosphate carboxylase large chain (488 aa).

Asparagine 127 and threonine 177 together coordinate substrate. The active-site Proton acceptor is lysine 179. Residue lysine 181 participates in substrate binding. Residues lysine 205, aspartate 207, and glutamate 208 each contribute to the Mg(2+) site. Lysine 205 is modified (N6-carboxylysine). The active-site Proton acceptor is histidine 297. Arginine 298, histidine 330, and serine 382 together coordinate substrate.

It belongs to the RuBisCO large chain family. Type I subfamily. In terms of assembly, heterohexadecamer of 8 large chains and 8 small chains. Mg(2+) is required as a cofactor.

The protein resides in the plastid. It localises to the chloroplast. The catalysed reaction is 2 (2R)-3-phosphoglycerate + 2 H(+) = D-ribulose 1,5-bisphosphate + CO2 + H2O. The enzyme catalyses D-ribulose 1,5-bisphosphate + O2 = 2-phosphoglycolate + (2R)-3-phosphoglycerate + 2 H(+). In terms of biological role, ruBisCO catalyzes two reactions: the carboxylation of D-ribulose 1,5-bisphosphate, the primary event in carbon dioxide fixation, as well as the oxidative fragmentation of the pentose substrate in the photorespiration process. Both reactions occur simultaneously and in competition at the same active site. The chain is Ribulose bisphosphate carboxylase large chain from Gracilaria tenuistipitata var. liui (Red alga).